Consider the following 122-residue polypeptide: Large ribosomal subunit protein uL14c (122 aa).

It belongs to the universal ribosomal protein uL14 family. In terms of assembly, part of the 50S ribosomal subunit.

The protein localises to the plastid. Its subcellular location is the chloroplast. In terms of biological role, binds to 23S rRNA. The sequence is that of Large ribosomal subunit protein uL14c from Oltmannsiellopsis viridis (Marine flagellate).